The primary structure comprises 122 residues: Small ribosomal subunit protein uS13 (122 aa).

Over residues 95–116 (GLPVRGQKTKTNARTRKGRRKT) the composition is skewed to basic residues. The segment at 95 to 122 (GLPVRGQKTKTNARTRKGRRKTVGAATK) is disordered.

Belongs to the universal ribosomal protein uS13 family. Part of the 30S ribosomal subunit. Forms a loose heterodimer with protein S19. Forms two bridges to the 50S subunit in the 70S ribosome.

Located at the top of the head of the 30S subunit, it contacts several helices of the 16S rRNA. In the 70S ribosome it contacts the 23S rRNA (bridge B1a) and protein L5 of the 50S subunit (bridge B1b), connecting the 2 subunits; these bridges are implicated in subunit movement. Contacts the tRNAs in the A and P-sites. In Campylobacter curvus (strain 525.92), this protein is Small ribosomal subunit protein uS13.